Consider the following 206-residue polypeptide: Glycerol-3-phosphate acyltransferase (206 aa).

5 helical membrane passes run 14–34 (IALAAAVIGYLFGSIPFGLIL), 67–87 (ATLLLDALKASAAAWIVGYFL), 91–111 (AAIIAGFFAFIGHLFPVWIGF), 124–144 (LLGVAPIMVVLFAAVWLAVAF), and 148–168 (YSSLSALVAMLVIPVALLILG).

The protein belongs to the PlsY family. In terms of assembly, probably interacts with PlsX.

The protein resides in the cell inner membrane. The catalysed reaction is an acyl phosphate + sn-glycerol 3-phosphate = a 1-acyl-sn-glycero-3-phosphate + phosphate. The protein operates within lipid metabolism; phospholipid metabolism. Catalyzes the transfer of an acyl group from acyl-phosphate (acyl-PO(4)) to glycerol-3-phosphate (G3P) to form lysophosphatidic acid (LPA). This enzyme utilizes acyl-phosphate as fatty acyl donor, but not acyl-CoA or acyl-ACP. The chain is Glycerol-3-phosphate acyltransferase from Rhizobium etli (strain CIAT 652).